The following is a 160-amino-acid chain: Anaerobic nitrite reductase HBII (160 aa).

Residues 8–157 (GFTEEQEALV…LVAAIKLEMK (150 aa)) enclose the Globin domain. The Homodimerization signature appears at 41–45 (EIAPS). 6 residues coordinate heme b: S51, K65, H69, K99, S103, and H104. The Homodimerization motif lies at 111–123 (DEHFEVTKFALLE).

This sequence belongs to the plant globin family. As to quaternary structure, homodimer. It depends on heme b as a cofactor.

Its subcellular location is the cytoplasm. The protein resides in the nucleus. It catalyses the reaction Fe(III)-heme b-[protein] + nitric oxide + H2O = Fe(II)-heme b-[protein] + nitrite + 2 H(+). Its function is as follows. Phytoglobin that reduces nitrite to nitric oxide (NO) under anoxic conditions (e.g. during flooding or in waterlogged soil) and upon root nodulation. Required for general plant development and during nodulation, especially for the onset of symbiosis. Monitors nitric oxide (NO) levels during early phase of the nitrogen-fixing symbiosis and buffers oxygen in functioning nodules. May not function as an oxygen storage or transport protein. Has an unusually high affinity for O(2) through a hexacoordinate heme iron because of a very low dissociation constant. The chain is Anaerobic nitrite reductase HBII from Casuarina glauca (Swamp oak).